Here is a 502-residue protein sequence, read N- to C-terminus: Maturase K (502 aa).

It belongs to the intron maturase 2 family. MatK subfamily.

Its subcellular location is the plastid. The protein localises to the chloroplast. Usually encoded in the trnK tRNA gene intron. Probably assists in splicing its own and other chloroplast group II introns. The chain is Maturase K from Theobroma cacao (Cacao).